The following is an 83-amino-acid chain: Large ribosomal subunit protein bL27 (83 aa).

This sequence belongs to the bacterial ribosomal protein bL27 family.

The protein is Large ribosomal subunit protein bL27 (rpmA) of Thermotoga maritima (strain ATCC 43589 / DSM 3109 / JCM 10099 / NBRC 100826 / MSB8).